The chain runs to 197 residues: Holliday junction branch migration complex subunit RuvA (197 aa).

Positions 1–64 (MYEYIKGTYM…EDFIGLYGFG (64 aa)) are domain I. Positions 65-143 (SKEELELFNK…VNLDEGIQTD (79 aa)) are domain II. Positions 144 to 149 (SNDIKV) are flexible linker. Residues 149-197 (VSSKILEEAKEALMSLGYSEKECEKALKNVEEKESLEIIIKESLKFLMN) form a domain III region.

This sequence belongs to the RuvA family. As to quaternary structure, homotetramer. Forms an RuvA(8)-RuvB(12)-Holliday junction (HJ) complex. HJ DNA is sandwiched between 2 RuvA tetramers; dsDNA enters through RuvA and exits via RuvB. An RuvB hexamer assembles on each DNA strand where it exits the tetramer. Each RuvB hexamer is contacted by two RuvA subunits (via domain III) on 2 adjacent RuvB subunits; this complex drives branch migration. In the full resolvosome a probable DNA-RuvA(4)-RuvB(12)-RuvC(2) complex forms which resolves the HJ.

Its subcellular location is the cytoplasm. The RuvA-RuvB-RuvC complex processes Holliday junction (HJ) DNA during genetic recombination and DNA repair, while the RuvA-RuvB complex plays an important role in the rescue of blocked DNA replication forks via replication fork reversal (RFR). RuvA specifically binds to HJ cruciform DNA, conferring on it an open structure. The RuvB hexamer acts as an ATP-dependent pump, pulling dsDNA into and through the RuvAB complex. HJ branch migration allows RuvC to scan DNA until it finds its consensus sequence, where it cleaves and resolves the cruciform DNA. This chain is Holliday junction branch migration complex subunit RuvA, found in Hathewaya histolytica (Clostridium histolyticum).